A 363-amino-acid chain; its full sequence is 3-isopropylmalate dehydrogenase (363 aa).

Position 78–91 (78–91 (GKKWDDLPINQRPE)) interacts with NAD(+). Residues Arg99, Arg109, Arg138, and Asp227 each coordinate substrate. 3 residues coordinate Mg(2+): Asp227, Asp251, and Asp255. An NAD(+)-binding site is contributed by 285-297 (GSAPDIEGKNIAN).

The protein belongs to the isocitrate and isopropylmalate dehydrogenases family. LeuB type 1 subfamily. In terms of assembly, homodimer. Requires Mg(2+) as cofactor. Mn(2+) serves as cofactor.

It localises to the cytoplasm. It catalyses the reaction (2R,3S)-3-isopropylmalate + NAD(+) = 4-methyl-2-oxopentanoate + CO2 + NADH. It functions in the pathway amino-acid biosynthesis; L-leucine biosynthesis; L-leucine from 3-methyl-2-oxobutanoate: step 3/4. In terms of biological role, catalyzes the oxidation of 3-carboxy-2-hydroxy-4-methylpentanoate (3-isopropylmalate) to 3-carboxy-4-methyl-2-oxopentanoate. The product decarboxylates to 4-methyl-2 oxopentanoate. This chain is 3-isopropylmalate dehydrogenase, found in Buchnera aphidicola subsp. Uroleucon rudbeckiae.